Consider the following 200-residue polypeptide: Small ribosomal subunit protein mS38 (200 aa).

It belongs to the mitochondrion-specific ribosomal protein mS38 family. Component of the mitochondrial ribosome small subunit (28S) which comprises a 12S rRNA and about 30 distinct proteins. Interacts with Aurora-A. Ubiquitously expressed and especially highly expressed in heart, skeletal muscle and testis.

The protein resides in the mitochondrion matrix. It localises to the nucleus. In terms of biological role, may act as a negative regulator of Aurora-A kinase, by down-regulation through proteasome-dependent degradation. This is Small ribosomal subunit protein mS38 (Aurkaip1) from Mus musculus (Mouse).